A 350-amino-acid polypeptide reads, in one-letter code: MNQLFLHCRPGFEKECAAEITELAAAQGIYGYSKTKDNAAFVVFITQDERGAETLIRQLPFQSLIFVRQWFAGFGNLSDLPVTDRVSPLLEAARALPKTSDLTGETVDTNEGKALSALVKKFLLPFGKALDAHKCLDRKSPWRLHLVFLSGTEAYLGVAPVNNSSAWPMGIPRLRLPKSAPSRATLKLEEAWHHFIPAADWDRRLAPGMRAVDLGAAPGGWTWQLVQRSIYVEAIDNGPMDKDLLDSGLVTHVLADGFLFEPKKPVDWLVCDIVDKPARVSSMVIKWFSKGHCRQAIFNLKLPMKQRYMEVQKCRTRILGELGSLGMRAELDFKQLYHDREEVTGYLRVF.

S-adenosyl-L-methionine-binding positions include 217–220 (APGG), Asp236, Asp256, and Asp272. Lys301 serves as the catalytic Proton acceptor.

This sequence belongs to the class I-like SAM-binding methyltransferase superfamily. RNA methyltransferase RlmE family. RlmM subfamily. As to quaternary structure, monomer.

It localises to the cytoplasm. The catalysed reaction is cytidine(2498) in 23S rRNA + S-adenosyl-L-methionine = 2'-O-methylcytidine(2498) in 23S rRNA + S-adenosyl-L-homocysteine + H(+). Its function is as follows. Catalyzes the 2'-O-methylation at nucleotide C2498 in 23S rRNA. This chain is Ribosomal RNA large subunit methyltransferase M, found in Cellvibrio japonicus (strain Ueda107) (Pseudomonas fluorescens subsp. cellulosa).